Consider the following 161-residue polypeptide: Nucleotide-binding protein Pcar_0033 (161 aa).

This sequence belongs to the YajQ family.

Its function is as follows. Nucleotide-binding protein. The chain is Nucleotide-binding protein Pcar_0033 from Syntrophotalea carbinolica (strain DSM 2380 / NBRC 103641 / GraBd1) (Pelobacter carbinolicus).